Consider the following 234-residue polypeptide: Ubiquinone biosynthesis O-methyltransferase (234 aa).

4 residues coordinate S-adenosyl-L-methionine: R40, G59, D80, and M123.

The protein belongs to the methyltransferase superfamily. UbiG/COQ3 family.

The catalysed reaction is a 3-demethylubiquinol + S-adenosyl-L-methionine = a ubiquinol + S-adenosyl-L-homocysteine + H(+). It catalyses the reaction a 3-(all-trans-polyprenyl)benzene-1,2-diol + S-adenosyl-L-methionine = a 2-methoxy-6-(all-trans-polyprenyl)phenol + S-adenosyl-L-homocysteine + H(+). It functions in the pathway cofactor biosynthesis; ubiquinone biosynthesis. Functionally, O-methyltransferase that catalyzes the 2 O-methylation steps in the ubiquinone biosynthetic pathway. This Coxiella burnetii (strain CbuK_Q154) (Coxiella burnetii (strain Q154)) protein is Ubiquinone biosynthesis O-methyltransferase.